The chain runs to 416 residues: 46 kDa surface antigen (416 aa).

The first 27 residues, 1-27, serve as a signal peptide directing secretion; it reads MLRKKFLYSSAIYATSLASIIAFVAAG. A lipid anchor (N-palmitoyl cysteine) is attached at C28. The S-diacylglycerol cysteine moiety is linked to residue C28.

It localises to the cell membrane. This chain is 46 kDa surface antigen (p46), found in Mesomycoplasma hyopneumoniae (strain 232) (Mycoplasma hyopneumoniae).